The sequence spans 355 residues: Nicotinate-nucleotide--dimethylbenzimidazole phosphoribosyltransferase (355 aa).

The active-site Proton acceptor is Glu-321.

This sequence belongs to the CobT family.

It carries out the reaction 5,6-dimethylbenzimidazole + nicotinate beta-D-ribonucleotide = alpha-ribazole 5'-phosphate + nicotinate + H(+). Its pathway is nucleoside biosynthesis; alpha-ribazole biosynthesis; alpha-ribazole from 5,6-dimethylbenzimidazole: step 1/2. Functionally, catalyzes the synthesis of alpha-ribazole-5'-phosphate from nicotinate mononucleotide (NAMN) and 5,6-dimethylbenzimidazole (DMB). The protein is Nicotinate-nucleotide--dimethylbenzimidazole phosphoribosyltransferase of Desulfotalea psychrophila (strain LSv54 / DSM 12343).